The primary structure comprises 221 residues: Octanoyltransferase (221 aa).

One can recognise a BPL/LPL catalytic domain in the interval 35 to 221 (ESYENRIIFC…RELLAALLSK (187 aa)). Substrate is bound by residues 80 to 87 (RGGDITYH), 152 to 154 (AIG), and 165 to 167 (GLA). Cys-183 (acyl-thioester intermediate) is an active-site residue.

This sequence belongs to the LipB family.

Its subcellular location is the cytoplasm. It carries out the reaction octanoyl-[ACP] + L-lysyl-[protein] = N(6)-octanoyl-L-lysyl-[protein] + holo-[ACP] + H(+). The protein operates within protein modification; protein lipoylation via endogenous pathway; protein N(6)-(lipoyl)lysine from octanoyl-[acyl-carrier-protein]: step 1/2. Catalyzes the transfer of endogenously produced octanoic acid from octanoyl-acyl-carrier-protein onto the lipoyl domains of lipoate-dependent enzymes. Lipoyl-ACP can also act as a substrate although octanoyl-ACP is likely to be the physiological substrate. The sequence is that of Octanoyltransferase from Bacteroides fragilis (strain YCH46).